A 202-amino-acid polypeptide reads, in one-letter code: Securin-2 (202 aa).

Positions 60 to 105 (TRKALGTVNRATEKSVKTNGPRKQKQPSFSAKKMTEKTVKTKSSVP) are disordered. The D-box signature appears at 61 to 64 (RKAL). The SH3-binding signature appears at 163–173 (PPSPVKMPSPP).

This sequence belongs to the securin family. In terms of tissue distribution, expressed at low levels in the pituitary, liver, spleen, prostate, testis, ovary, small intestine and colon. Also expressed in various pituitary, testicular, liver and ovarian tumors.

The protein resides in the cytoplasm. It is found in the nucleus. This is Securin-2 (PTTG2) from Homo sapiens (Human).